Reading from the N-terminus, the 693-residue chain is Cleavage and polyadenylation specificity factor subunit 3-I (693 aa).

The HXHXDH motif motif lies at 81–86 (HFHIDH).

Belongs to the metallo-beta-lactamase superfamily. RNA-metabolizing metallo-beta-lactamase-like family. INTS11 subfamily. In terms of assembly, component of the CPSF complex, at least composed of CPSF160, CPSF100, CPSF73-I, CPSF73-II, CPSF30, FY and FIPS5. Interacts with CLPS3, CPSF100, CPSF160 and FY. As to expression, highly expressed in carpels. Also detected in seedlings, roots, stems, leaves, flowers and siliques.

The protein resides in the nucleus. Functionally, component of the cleavage and polyadenylation specificity factor (CPSF) complex that play a key role in pre-mRNA 3'-end formation, recognizing the AAUAAA signal sequence and interacting with poly(A) polymerase and other factors to bring about cleavage and poly(A) addition. May function as mRNA 3'-end-processing endonuclease and also be involved in the histone 3'-end pre-mRNA processing. This chain is Cleavage and polyadenylation specificity factor subunit 3-I (CPSF73-I), found in Arabidopsis thaliana (Mouse-ear cress).